Reading from the N-terminus, the 384-residue chain is S-adenosylmethionine synthase (384 aa).

Position 15 (histidine 15) interacts with ATP. Aspartate 17 contributes to the Mg(2+) binding site. A K(+)-binding site is contributed by glutamate 43. L-methionine-binding residues include glutamate 56 and glutamine 99. Residues 99-109 are flexible loop; it reads QSPDINQGVDR. ATP-binding positions include 164–166, 230–231, aspartate 239, 245–246, alanine 262, and lysine 266; these read DAK, RF, and RK. L-methionine is bound at residue aspartate 239. Lysine 270 provides a ligand contact to L-methionine.

The protein belongs to the AdoMet synthase family. In terms of assembly, homotetramer; dimer of dimers. Requires Mg(2+) as cofactor. It depends on K(+) as a cofactor.

Its subcellular location is the cytoplasm. It carries out the reaction L-methionine + ATP + H2O = S-adenosyl-L-methionine + phosphate + diphosphate. It participates in amino-acid biosynthesis; S-adenosyl-L-methionine biosynthesis; S-adenosyl-L-methionine from L-methionine: step 1/1. In terms of biological role, catalyzes the formation of S-adenosylmethionine (AdoMet) from methionine and ATP. The overall synthetic reaction is composed of two sequential steps, AdoMet formation and the subsequent tripolyphosphate hydrolysis which occurs prior to release of AdoMet from the enzyme. The protein is S-adenosylmethionine synthase of Salmonella agona (strain SL483).